The chain runs to 517 residues: ATP synthase subunit alpha (517 aa).

174 to 181 (GDRQTGKT) is a binding site for ATP.

It belongs to the ATPase alpha/beta chains family. In terms of assembly, F-type ATPases have 2 components, CF(1) - the catalytic core - and CF(0) - the membrane proton channel. CF(1) has five subunits: alpha(3), beta(3), gamma(1), delta(1), epsilon(1). CF(0) has four main subunits: a(1), b(1), b'(1) and c(9-12).

The protein localises to the cell inner membrane. The enzyme catalyses ATP + H2O + 4 H(+)(in) = ADP + phosphate + 5 H(+)(out). Produces ATP from ADP in the presence of a proton gradient across the membrane. The alpha chain is a regulatory subunit. This chain is ATP synthase subunit alpha, found in Methylibium petroleiphilum (strain ATCC BAA-1232 / LMG 22953 / PM1).